The following is a 308-amino-acid chain: Glycine betaine uptake system ATP-binding protein YehX (308 aa).

Positions 2–235 (IEFSHVSKLF…PANDFVRQFF (234 aa)) constitute an ABC transporter domain. Residue 34–41 (GTSGSGKS) participates in ATP binding.

The protein belongs to the ABC transporter superfamily. In terms of assembly, the complex is composed of two ATP-binding proteins (YehX), two transmembrane proteins (YehW and YehY) and a solute-binding protein (YehZ).

It catalyses the reaction glycine betaine(out) + ATP + H2O = glycine betaine(in) + ADP + phosphate + H(+). In terms of biological role, part of an ABC transporter complex involved in low-affinity glycine betaine uptake. Probably responsible for energy coupling to the transport system. The chain is Glycine betaine uptake system ATP-binding protein YehX (yehX) from Escherichia coli (strain K12).